The primary structure comprises 457 residues: Bifunctional protein GlmU (457 aa).

The interval 1 to 229 is pyrophosphorylase; sequence MYNCAIILAA…YEEIMGVNSR (229 aa). UDP-N-acetyl-alpha-D-glucosamine-binding positions include 8–11, lysine 22, glutamine 73, and 78–79; these read LAAG and GT. Aspartate 103 contributes to the Mg(2+) binding site. Glycine 140, glutamate 155, asparagine 170, and asparagine 227 together coordinate UDP-N-acetyl-alpha-D-glucosamine. Residue asparagine 227 participates in Mg(2+) binding. A linker region spans residues 230 to 250; sequence VQLSEAEIVMRKRINHKHMVN. Residues 251–457 are N-acetyltransferase; the sequence is GVTFIDCEST…WLDKKGLLKK (207 aa). UDP-N-acetyl-alpha-D-glucosamine contacts are provided by arginine 332 and lysine 350. Catalysis depends on histidine 362, which acts as the Proton acceptor. 2 residues coordinate UDP-N-acetyl-alpha-D-glucosamine: tyrosine 365 and asparagine 376. Residues 385 to 386, alanine 422, and arginine 439 contribute to the acetyl-CoA site; that span reads NY.

In the N-terminal section; belongs to the N-acetylglucosamine-1-phosphate uridyltransferase family. The protein in the C-terminal section; belongs to the transferase hexapeptide repeat family. In terms of assembly, homotrimer. Mg(2+) serves as cofactor.

The protein localises to the cytoplasm. It catalyses the reaction alpha-D-glucosamine 1-phosphate + acetyl-CoA = N-acetyl-alpha-D-glucosamine 1-phosphate + CoA + H(+). The enzyme catalyses N-acetyl-alpha-D-glucosamine 1-phosphate + UTP + H(+) = UDP-N-acetyl-alpha-D-glucosamine + diphosphate. The protein operates within nucleotide-sugar biosynthesis; UDP-N-acetyl-alpha-D-glucosamine biosynthesis; N-acetyl-alpha-D-glucosamine 1-phosphate from alpha-D-glucosamine 6-phosphate (route II): step 2/2. It functions in the pathway nucleotide-sugar biosynthesis; UDP-N-acetyl-alpha-D-glucosamine biosynthesis; UDP-N-acetyl-alpha-D-glucosamine from N-acetyl-alpha-D-glucosamine 1-phosphate: step 1/1. Its pathway is bacterial outer membrane biogenesis; LPS lipid A biosynthesis. Its function is as follows. Catalyzes the last two sequential reactions in the de novo biosynthetic pathway for UDP-N-acetylglucosamine (UDP-GlcNAc). The C-terminal domain catalyzes the transfer of acetyl group from acetyl coenzyme A to glucosamine-1-phosphate (GlcN-1-P) to produce N-acetylglucosamine-1-phosphate (GlcNAc-1-P), which is converted into UDP-GlcNAc by the transfer of uridine 5-monophosphate (from uridine 5-triphosphate), a reaction catalyzed by the N-terminal domain. The protein is Bifunctional protein GlmU of Clostridium botulinum (strain Kyoto / Type A2).